The following is a 423-amino-acid chain: Serine hydroxymethyltransferase (423 aa).

(6S)-5,6,7,8-tetrahydrofolate contacts are provided by residues Leu120 and 124–126; that span reads GHL. Lys229 is modified (N6-(pyridoxal phosphate)lysine). 353–355 serves as a coordination point for (6S)-5,6,7,8-tetrahydrofolate; that stretch reads SPF.

Belongs to the SHMT family. As to quaternary structure, homodimer. Requires pyridoxal 5'-phosphate as cofactor.

It localises to the cytoplasm. The enzyme catalyses (6R)-5,10-methylene-5,6,7,8-tetrahydrofolate + glycine + H2O = (6S)-5,6,7,8-tetrahydrofolate + L-serine. It participates in one-carbon metabolism; tetrahydrofolate interconversion. It functions in the pathway amino-acid biosynthesis; glycine biosynthesis; glycine from L-serine: step 1/1. Its function is as follows. Catalyzes the reversible interconversion of serine and glycine with tetrahydrofolate (THF) serving as the one-carbon carrier. This reaction serves as the major source of one-carbon groups required for the biosynthesis of purines, thymidylate, methionine, and other important biomolecules. Also exhibits THF-independent aldolase activity toward beta-hydroxyamino acids, producing glycine and aldehydes, via a retro-aldol mechanism. The polypeptide is Serine hydroxymethyltransferase (Prochlorococcus marinus (strain AS9601)).